Consider the following 196-residue polypeptide: MSSQIDAVILAGGMARRMGGDDKGLVELNGEAMIKHTIDRIKPQVKEILINANRNQTRYAEFGFKVISDEHTGFLGPLAGMITAMGQTDADYLLVVPCDCPLLPTDLVPRMLAAIKAENAELAVASDGEYEQPVVLLLKPSLRDSMKAFLEAGERKVDFWYAKHHFVVESFADQPNAFVNVNTPEQKQRLAMEITK.

GTP is bound by residues 10–12 (LAG), Lys23, Asn51, Asp69, and Asp99. Asp99 contacts Mg(2+).

It belongs to the MobA family. Monomer. It depends on Mg(2+) as a cofactor.

The protein resides in the cytoplasm. It catalyses the reaction Mo-molybdopterin + GTP + H(+) = Mo-molybdopterin guanine dinucleotide + diphosphate. Functionally, transfers a GMP moiety from GTP to Mo-molybdopterin (Mo-MPT) cofactor (Moco or molybdenum cofactor) to form Mo-molybdopterin guanine dinucleotide (Mo-MGD) cofactor. The sequence is that of Molybdenum cofactor guanylyltransferase from Shewanella baltica (strain OS185).